The chain runs to 356 residues: MDLVFRPERYPFLTQDLPGVGGEIRVEPEDFQVEEVPAYLPKGEGEHLYLLLEKEGRTTREVLEFLRDEVGVPEKEIGVAGLKDKRAKTRQWFSIPRKYEDALCLLENLQGVRLLAADLHTNKLRTGHLKGNRFHILIRRPKGGVAEAEAVLKRLAEKGVPNYYGPQRFGLGGLNPVRGYKLVKEGKGRGSPWLKRFLIGSLQSLLFNDWVALRMALGLYDRVVPGDWAKKHATGGEFLVEDPGEAERALRLEISATGPLFGKKYPEAQGEARAIEDEVLARYGLKREEFRARRGARRPIRVPLAEWKVEEAPEGLWLSFFLPKGSYATSLLREVMKVEALDHLEAEPAPEDAEGL.

Aspartate 84 acts as the Nucleophile in catalysis. One can recognise a TRUD domain in the interval 159-302; the sequence is GVPNYYGPQR…RRGARRPIRV (144 aa).

It belongs to the pseudouridine synthase TruD family.

The enzyme catalyses uridine(13) in tRNA = pseudouridine(13) in tRNA. Its function is as follows. Responsible for synthesis of pseudouridine from uracil-13 in transfer RNAs. The chain is tRNA pseudouridine synthase D from Thermus thermophilus (strain ATCC 27634 / DSM 579 / HB8).